Reading from the N-terminus, the 2224-residue chain is Multifunctional protein r (2224 aa).

Residues 1–369 are GATase (Glutamine amidotransferase); it reads MASTDCYLAL…PQDTEFLFDV (369 aa). 3 residues coordinate L-glutamine: S55, G240, and G242. The 186-residue stretch at 195–380 folds into the Glutamine amidotransferase type-1 domain; the sequence is RIAILDCGLK…MESIQQKDLT (186 aa). Catalysis depends on C269, which acts as the Nucleophile; for GATase activity. The L-glutamine site is built by L270, Q273, N311, G313, and Y314. Catalysis depends on for GATase activity residues H353 and E355. The tract at residues 370-415 is linker; it reads FMESIQQKDLTIPQLIEQRLRPTTPAIDSAPVMPRKVLILGSGGLS. The CPSase (Carbamoyl-phosphate synthase) stretch occupies residues 416 to 1470; it reads IGQAGEFDYS…KPPMKTHTDC (1055 aa). The ATP site is built by R525, R565, G571, G572, K602, E609, G635, I636, H637, Q678, and E692. ATP-grasp domains are found at residues 529-721 and 1066-1257; these read AERV…KLAL and SRML…RAIV. Residues Q678, E692, and N694 each contribute to the Mg(2+) site. Mn(2+)-binding residues include Q678, E692, and N694. The ATP site is built by R1102, K1141, L1143, E1148, G1173, V1174, H1175, S1176, Q1216, and E1228. Residues Q1216, E1228, and N1230 each coordinate Mg(2+). Mn(2+) is bound by residues Q1216, E1228, and N1230. The MGS-like domain occupies 1322-1477; sequence FQIPKNAVLL…TDCMTSRRIV (156 aa). A linker region spans residues 1471-1484; it reads MTSRRIVKLPGFID. A DHOase (dihydroorotase) region spans residues 1485-1800; the sequence is VHVHLREPGA…GTKVKGRVHR (316 aa). Zn(2+) contacts are provided by H1486 and H1488. Residues R1490 and N1520 each coordinate (S)-dihydroorotate. The Zn(2+) site is built by K1571, H1605, C1628, H1629, and E1652. At K1571 the chain carries N6-carboxylysine. (S)-dihydroorotate is bound at residue R1676. Residue D1701 participates in Zn(2+) binding. Residue D1701 is the For DHOase activity of the active site. 2 residues coordinate (S)-dihydroorotate: H1705 and P1717. A linker region spans residues 1801-1912; it reads VVLRGEVAFV…QRTTNSNPVA (112 aa). Residues 1821 to 1843 form a disordered region; sequence GQNVRPKQSPLASEASQDLLPSD. Phosphoserine is present on residues S1883, S1885, S1892, and S1894. The tract at residues 1913–2224 is ATCase (Aspartate transcarbamylase); that stretch reads HSLMGKHILA…MVVGGRNTAL (312 aa). R1970 and T1971 together coordinate carbamoyl phosphate. K1998 contacts L-aspartate. The carbamoyl phosphate site is built by R2019, H2047, and Q2050. The L-aspartate site is built by R2080 and R2141. Carbamoyl phosphate contacts are provided by L2180 and P2181.

The protein in the N-terminal section; belongs to the CarA family. In the 2nd section; belongs to the CarB family. It in the 3rd section; belongs to the metallo-dependent hydrolases superfamily. DHOase family. CAD subfamily. This sequence in the C-terminal section; belongs to the aspartate/ornithine carbamoyltransferase superfamily. ATCase family. Mg(2+) serves as cofactor. Mn(2+) is required as a cofactor. It depends on Zn(2+) as a cofactor.

The protein resides in the cytoplasm. It catalyses the reaction hydrogencarbonate + L-glutamine + 2 ATP + H2O = carbamoyl phosphate + L-glutamate + 2 ADP + phosphate + 2 H(+). The enzyme catalyses L-glutamine + H2O = L-glutamate + NH4(+). The catalysed reaction is hydrogencarbonate + NH4(+) + 2 ATP = carbamoyl phosphate + 2 ADP + phosphate + 2 H(+). It carries out the reaction carbamoyl phosphate + L-aspartate = N-carbamoyl-L-aspartate + phosphate + H(+). It catalyses the reaction (S)-dihydroorotate + H2O = N-carbamoyl-L-aspartate + H(+). Its pathway is pyrimidine metabolism; UMP biosynthesis via de novo pathway; (S)-dihydroorotate from bicarbonate: step 1/3. It functions in the pathway pyrimidine metabolism; UMP biosynthesis via de novo pathway; (S)-dihydroorotate from bicarbonate: step 2/3. It participates in pyrimidine metabolism; UMP biosynthesis via de novo pathway; (S)-dihydroorotate from bicarbonate: step 3/3. Functionally, multifunctional protein that encodes the first 3 enzymatic activities of the de novo pyrimidine pathway: carbamoylphosphate synthetase (CPSase; EC 6.3.5.5), aspartate transcarbamylase (ATCase; EC 2.1.3.2) and dihydroorotase (DHOase; EC 3.5.2.3). The CPSase-function is accomplished in 2 steps, by a glutamine-dependent amidotransferase activity (GATase) that binds and cleaves glutamine to produce ammonia, followed by an ammonium-dependent carbamoyl phosphate synthetase, which reacts with the ammonia, hydrogencarbonate and ATP to form carbamoyl phosphate. The endogenously produced carbamoyl phosphate is sequestered and channeled to the ATCase active site. ATCase then catalyzes the formation of carbamoyl-L-aspartate from L-aspartate and carbamoyl phosphate. In the last step, DHOase catalyzes the cyclization of carbamoyl aspartate to dihydroorotate. The sequence is that of Multifunctional protein r (r) from Drosophila melanogaster (Fruit fly).